The sequence spans 308 residues: Acetaldehyde dehydrogenase 1 (308 aa).

10–13 (SGNI) contacts NAD(+). Cys-128 acts as the Acyl-thioester intermediate in catalysis. Residues 159-167 (SAGPGTRAN) and Asn-285 contribute to the NAD(+) site.

Belongs to the acetaldehyde dehydrogenase family.

The enzyme catalyses acetaldehyde + NAD(+) + CoA = acetyl-CoA + NADH + H(+). This is Acetaldehyde dehydrogenase 1 from Salinispora arenicola (strain CNS-205).